The chain runs to 398 residues: Stabilizer of axonemal microtubules 2 (398 aa).

Mn stretches follow at residues 114-126, 148-162, 248-260, 282-296, 316-328, and 350-364; these read STTF…PQEI, ITSH…QLEL, NSTS…PYQA, KSIM…ESCR, LSTF…PHEL, and VTMY…RQEI.

It belongs to the FAM154 family.

In Homo sapiens (Human), this protein is Stabilizer of axonemal microtubules 2 (SAXO2).